Here is a 304-residue protein sequence, read N- to C-terminus: ATP synthase gamma chain (304 aa).

It belongs to the ATPase gamma chain family. F-type ATPases have 2 components, CF(1) - the catalytic core - and CF(0) - the membrane proton channel. CF(1) has five subunits: alpha(3), beta(3), gamma(1), delta(1), epsilon(1). CF(0) has three main subunits: a, b and c.

Its subcellular location is the cell membrane. Functionally, produces ATP from ADP in the presence of a proton gradient across the membrane. The gamma chain is believed to be important in regulating ATPase activity and the flow of protons through the CF(0) complex. In Mycolicibacterium paratuberculosis (strain ATCC BAA-968 / K-10) (Mycobacterium paratuberculosis), this protein is ATP synthase gamma chain.